The chain runs to 204 residues: uncharacterized protein (204 aa).

This is an uncharacterized protein from Rickettsia prowazekii (strain Madrid E).